Here is a 72-residue protein sequence, read N- to C-terminus: DNA-directed RNA polymerase subunit epsilon (72 aa).

The protein belongs to the RNA polymerase subunit epsilon family. In terms of assembly, RNAP is composed of a core of 2 alpha, a beta and a beta' subunit. The core is associated with a delta subunit, and at least one of epsilon or omega. When a sigma factor is associated with the core the holoenzyme is formed, which can initiate transcription.

The enzyme catalyses RNA(n) + a ribonucleoside 5'-triphosphate = RNA(n+1) + diphosphate. A non-essential component of RNA polymerase (RNAP). In Levilactobacillus brevis (strain ATCC 367 / BCRC 12310 / CIP 105137 / JCM 1170 / LMG 11437 / NCIMB 947 / NCTC 947) (Lactobacillus brevis), this protein is DNA-directed RNA polymerase subunit epsilon.